The following is a 259-amino-acid chain: Protein unc-50 homolog (259 aa).

Residue methionine 1 is modified to N-acetylmethionine. Topologically, residues methionine 1–proline 82 are cytoplasmic. Residue serine 6 is modified to Phosphoserine. Residues alanine 83 to leucine 103 form a helical membrane-spanning segment. The Lumenal segment spans residues aspartate 104–leucine 115. The helical transmembrane segment at tryptophan 116–isoleucine 136 threads the bilayer. Residues serine 137 to alanine 163 lie on the Cytoplasmic side of the membrane. A helical transmembrane segment spans residues phenylalanine 164–leucine 184. At threonine 185–threonine 187 the chain is on the lumenal side. The helical transmembrane segment at phenylalanine 188–valine 208 threads the bilayer. Topologically, residues threonine 209–threonine 222 are cytoplasmic. Residues valine 223–glycine 243 form a helical membrane-spanning segment. Over tryptophan 244 to lysine 259 the chain is Lumenal.

It belongs to the unc-50 family. In terms of tissue distribution, expressed in brain, kidney and testis, and at lower levels in heart.

It is found in the nucleus inner membrane. It localises to the golgi apparatus membrane. Involved in the cell surface expression of neuronal nicotinic receptors. Binds RNA. The protein is Protein unc-50 homolog (Unc50) of Rattus norvegicus (Rat).